The primary structure comprises 129 residues: MTQTPLYGERAIAEAELICFDNPRPGRPYEVSIELPEFTCKCPFSGYPDFAVLRMIYQPGPRVVELKAIKLYVNSYRDQSISHEEVTNRILDDLVAATDPVWMQLEADFNPRGNVHTVVRVSHGTRQPC.

Cys42 (thioimide intermediate) is an active-site residue. Asp49 acts as the Proton donor in catalysis. Substrate-binding positions include 64–66 (VEL) and 83–84 (HE).

This sequence belongs to the GTP cyclohydrolase I family. QueF type 1 subfamily.

It is found in the cytoplasm. It catalyses the reaction 7-aminomethyl-7-carbaguanine + 2 NADP(+) = 7-cyano-7-deazaguanine + 2 NADPH + 3 H(+). The protein operates within tRNA modification; tRNA-queuosine biosynthesis. Its function is as follows. Catalyzes the NADPH-dependent reduction of 7-cyano-7-deazaguanine (preQ0) to 7-aminomethyl-7-deazaguanine (preQ1). The protein is NADPH-dependent 7-cyano-7-deazaguanine reductase of Synechococcus sp. (strain CC9605).